The sequence spans 259 residues: uncharacterized protein (259 aa).

Residues 1–19 constitute a signal peptide (or 26); sequence MKLSVKIAGVLTVAAAAMT. ATP is bound at residue 214 to 221; the sequence is GPYELGKT.

This is an uncharacterized protein from Bacillus subtilis (strain 168).